A 275-amino-acid polypeptide reads, in one-letter code: Vitamin B12-binding protein (275 aa).

The first 19 residues, 1-19, serve as a signal peptide directing secretion; that stretch reads MMNKICLYLPLFFSSLTMA. Positions 25–272 constitute a Fe/B12 periplasmic-binding domain; that stretch reads RVISLAPHAT…EVCEHFESVK (248 aa). Residues Cys-185 and Cys-265 are joined by a disulfide bond.

The protein belongs to the BtuF family. The complex is composed of two ATP-binding proteins (BtuD), two transmembrane proteins (BtuC) and a solute-binding protein (BtuF).

Its subcellular location is the periplasm. Its function is as follows. Part of the ABC transporter complex BtuCDF involved in vitamin B12 import. Binds vitamin B12 and delivers it to the periplasmic surface of BtuC. The polypeptide is Vitamin B12-binding protein (Vibrio parahaemolyticus serotype O3:K6 (strain RIMD 2210633)).